Reading from the N-terminus, the 510-residue chain is NAD(P)H-quinone oxidoreductase subunit 2, chloroplastic (510 aa).

12 helical membrane passes run 24–44 (LLLF…GLIL), 59–79 (WFYF…LFRW), 99–119 (IFQF…VEYI), 124–144 (MAIT…MFLC), 149–169 (LITI…LSGY), 183–203 (YLLM…WLYG), 229–249 (ISIA…PAPF), 295–315 (WHLL…LIAI), 323–343 (MLAY…IVGD), 347–367 (GYAS…GTFA), 395–415 (ALSS…AGFF), and 418–438 (LHLF…IGLL).

This sequence belongs to the complex I subunit 2 family. NDH is composed of at least 16 different subunits, 5 of which are encoded in the nucleus.

Its subcellular location is the plastid. The protein resides in the chloroplast thylakoid membrane. The catalysed reaction is a plastoquinone + NADH + (n+1) H(+)(in) = a plastoquinol + NAD(+) + n H(+)(out). The enzyme catalyses a plastoquinone + NADPH + (n+1) H(+)(in) = a plastoquinol + NADP(+) + n H(+)(out). Its function is as follows. NDH shuttles electrons from NAD(P)H:plastoquinone, via FMN and iron-sulfur (Fe-S) centers, to quinones in the photosynthetic chain and possibly in a chloroplast respiratory chain. The immediate electron acceptor for the enzyme in this species is believed to be plastoquinone. Couples the redox reaction to proton translocation, and thus conserves the redox energy in a proton gradient. This Yucca glauca (Soapweed yucca) protein is NAD(P)H-quinone oxidoreductase subunit 2, chloroplastic.